The following is a 184-amino-acid chain: Large ribosomal subunit protein bL9 (184 aa).

The segment at 156–184 is disordered; sequence RQAKLQNQKSEQQEAEQDASKEAADADDS. Positions 173–184 are enriched in basic and acidic residues; the sequence is DASKEAADADDS.

Belongs to the bacterial ribosomal protein bL9 family.

Functionally, binds to the 23S rRNA. This chain is Large ribosomal subunit protein bL9, found in Wolbachia pipientis subsp. Culex pipiens (strain wPip).